Consider the following 245-residue polypeptide: DnaJ homolog subfamily B member 6-B (245 aa).

The region spanning 3-69 is the J domain; sequence EYYDVLGVQR…KKRDIYDKYG (67 aa).

In terms of assembly, homooligomer.

The protein localises to the cytoplasm. It localises to the perinuclear region. It is found in the nucleus. In terms of biological role, has a stimulatory effect on the ATPase activity of HSP70 in a dose-dependent and time-dependent manner and hence acts as a co-chaperone of HSP70. Plays an indispensable role in the organization of KRT8/KRT18 filaments. Acts as an endogenous molecular chaperone for neuronal proteins including huntingtin. Suppresses aggregation and toxicity of polyglutamine-containing, aggregation-prone proteins. Also reduces cellular toxicity and caspase-3 activity. This Xenopus laevis (African clawed frog) protein is DnaJ homolog subfamily B member 6-B (dnajb6-b).